Here is a 120-residue protein sequence, read N- to C-terminus: NAD(P)H-quinone oxidoreductase subunit 3, chloroplastic (120 aa).

A run of 3 helical transmembrane segments spans residues 9–29 (IFWTFLIIASLIPILVFWISG), 64–84 (MFALVFVVFDVETVFLYPWAM), and 88–108 (VLGVSVFIEAFIFVLILVVGL).

Belongs to the complex I subunit 3 family. NDH is composed of at least 16 different subunits, 5 of which are encoded in the nucleus.

It localises to the plastid. It is found in the chloroplast thylakoid membrane. It catalyses the reaction a plastoquinone + NADH + (n+1) H(+)(in) = a plastoquinol + NAD(+) + n H(+)(out). It carries out the reaction a plastoquinone + NADPH + (n+1) H(+)(in) = a plastoquinol + NADP(+) + n H(+)(out). Functionally, NDH shuttles electrons from NAD(P)H:plastoquinone, via FMN and iron-sulfur (Fe-S) centers, to quinones in the photosynthetic chain and possibly in a chloroplast respiratory chain. The immediate electron acceptor for the enzyme in this species is believed to be plastoquinone. Couples the redox reaction to proton translocation, and thus conserves the redox energy in a proton gradient. The chain is NAD(P)H-quinone oxidoreductase subunit 3, chloroplastic from Zea mays (Maize).